The following is a 275-amino-acid chain: Two-component response regulator PprB (275 aa).

The region spanning S10–E128 is the Response regulatory domain. The residue at position 60 (D60) is a 4-aspartylphosphate. Positions S173–G205 are disordered. An HTH luxR-type domain is found at S200–A265. Residues N224–S243 constitute a DNA-binding region (H-T-H motif).

In terms of processing, phosphorylated by PprA.

In terms of biological role, member of the two-component regulatory system PprA/PprB involved in biofilm formation by controlling the expression of many related genes including type IVb pili major subunit flp pilin, adhesin bapA or cupE fimbriae. Functions as a transcription regulator by direct binding to promoter regions. Negatively regulates its own transcription. The chain is Two-component response regulator PprB from Pseudomonas aeruginosa (strain ATCC 15692 / DSM 22644 / CIP 104116 / JCM 14847 / LMG 12228 / 1C / PRS 101 / PAO1).